The primary structure comprises 352 residues: MDYQVSSPIYDIDYGPSEPCRKIDVKQMGAQLLPPLYSLVFLFGFVGNMLVVLILINCKRLKSMTDIYLLNLAISDLLFLFTIPFWAHYAAGQWDFGNTMCQFLTALYFIGFFSGIFFIILLTIDRYLAIVHAVFALKARTVTFGVVTSVITWVVAVFASLPGIIFTRSQKEGYHYSCSPHFPFSQYRFWKNFETLKMVILGLVLPLLVMVICYSGILKTLLRCRNEKKRHRAVRLIFTIMIVYFLFWAPYNIVLLINTYPDFFGVNNCNSSNRLDQAMQVTETLGMTHCCVNPIIYAFVGEKFRNYLVIFFQKHIAKRFCKCCSIFQKEAPERANSVYTRSTGEQEISVGL.

Residues 1 to 30 are Extracellular-facing; that stretch reads MDYQVSSPIYDIDYGPSEPCRKIDVKQMGA. Tyr3 bears the Sulfotyrosine mark. Residues Ser6 and Ser7 are each glycosylated (O-linked (GalNAc...) serine). Sulfotyrosine is present on residues Tyr10 and Tyr14. Disulfide bonds link Cys20-Cys269 and Cys101-Cys178. Residues 31–58 form a helical membrane-spanning segment; sequence QLLPPLYSLVFLFGFVGNMLVVLILINC. Over 59–68 the chain is Cytoplasmic; sequence KRLKSMTDIY. A helical membrane pass occupies residues 69–89; it reads LLNLAISDLLFLFTIPFWAHY. Residues 90 to 102 lie on the Extracellular side of the membrane; the sequence is AAGQWDFGNTMCQ. Residues 103 to 124 traverse the membrane as a helical segment; it reads FLTALYFIGFFSGIFFIILLTI. Residues 125-141 are Cytoplasmic-facing; sequence DRYLAIVHAVFALKART. Residues 142-166 traverse the membrane as a helical segment; it reads VTFGVVTSVITWVVAVFASLPGIIF. Residues 167–198 are Extracellular-facing; that stretch reads TRSQKEGYHYSCSPHFPFSQYRFWKNFETLKM. A helical membrane pass occupies residues 199–218; that stretch reads VILGLVLPLLVMVICYSGIL. Residues 219–235 are Cytoplasmic-facing; sequence KTLLRCRNEKKRHRAVR. The helical transmembrane segment at 236–260 threads the bilayer; that stretch reads LIFTIMIVYFLFWAPYNIVLLINTY. Over 261–277 the chain is Extracellular; it reads PDFFGVNNCNSSNRLDQ. A helical membrane pass occupies residues 278 to 301; that stretch reads AMQVTETLGMTHCCVNPIIYAFVG. Over 302–352 the chain is Cytoplasmic; it reads EKFRNYLVIFFQKHIAKRFCKCCSIFQKEAPERANSVYTRSTGEQEISVGL. 3 S-palmitoyl cysteine lipidation sites follow: Cys321, Cys323, and Cys324. Phosphoserine; by BARK1 occurs at positions 337, 342, and 349.

Belongs to the G-protein coupled receptor 1 family. In terms of assembly, interacts with PRAF2. Efficient ligand binding to CCL3/MIP-1alpha and CCL4/MIP-1beta requires sulfation, O-glycosylation and sialic acid modifications. Glycosylation on Ser-6 is required for efficient binding of CCL4. Interacts with GRK2. Interacts with ARRB1 and ARRB2. Interacts with CNIH4. Interacts with S100A4; this interaction stimulates T-lymphocyte chemotaxis. Post-translationally, sulfated on at least 2 of the N-terminal tyrosines. Sulfation is required for efficient binding of the chemokines, CCL3 and CCL4. In terms of processing, palmitoylation in the C-terminal is important for cell surface expression. Phosphorylation on serine residues in the C-terminal is stimulated by binding CC chemokines especially by APO-RANTES. Post-translationally, O-glycosylated, but not N-glycosylated. Ser-6 appears to be the major site even if Ser-7 may be also O-glycosylated. Also sialylated glycans present which contribute to chemokine binding. Ser-17 may also be glycosylated and, if so, with small moieties such as a T-antigen.

It is found in the cell membrane. In terms of biological role, receptor for a number of inflammatory CC-chemokines including CCL3/MIP-1-alpha, CCL4/MIP-1-beta and RANTES and subsequently transduces a signal by increasing the intracellular calcium ion level. May play a role in the control of granulocytic lineage proliferation or differentiation. Participates in T-lymphocyte migration to the infection site by acting as a chemotactic receptor. The chain is C-C chemokine receptor type 5 (CCR5) from Saimiri sciureus (Common squirrel monkey).